The following is a 724-amino-acid chain: Propionyl-CoA carboxylase alpha chain, mitochondrial (724 aa).

A mitochondrion-targeting transit peptide spans 1-48 (MAGQWVRTVALLAARRHWRRSSQQQLLGTLKHAPVYSYQCLVVSRSLS). One can recognise a Biotin carboxylation domain in the interval 58 to 505 (TFDKILIANR…STKFLSDVYP (448 aa)). Lys-61 is subject to N6-acetyllysine; alternate. Lys-61 carries the post-translational modification N6-succinyllysine; alternate. Lys-115 bears the N6-succinyllysine mark. Lys-146 bears the N6-acetyllysine; alternate mark. Lys-146 carries the N6-succinyllysine; alternate modification. Lys-150 is modified (N6-acetyllysine). Lys-173 is a binding site for ATP. In terms of domain architecture, ATP-grasp spans 177–374 (KLLAKRAKVN…LVQEMILVAK (198 aa)). Lys-184 bears the N6-succinyllysine mark. At Lys-196 the chain carries N6-acetyllysine; alternate. N6-succinyllysine; alternate is present on Lys-196. ATP is bound by residues 205 to 266 (AREI…PRHI), Glu-257, and Asn-292. Residue Ser-248 is modified to Phosphoserine. Lys-258 carries the post-translational modification N6-succinyllysine. Lys-324 carries the post-translational modification N6-acetyllysine; alternate. An N6-succinyllysine; alternate modification is found at Lys-324. Glu-332, Glu-345, and Asn-347 together coordinate Mg(2+). Positions 332, 345, and 347 each coordinate Mn(2+). Arg-349 is a catalytic residue. Residues Lys-381 and Lys-403 each carry the N6-succinyllysine modification. A biotin-binding site is contributed by Phe-405. Lys-492 is modified (N6-acetyllysine). 4 positions are modified to N6-succinyllysine: Lys-498, Lys-509, Lys-554, and Lys-644. The region spanning 645–724 (FMLEKVPKDT…GEGDLLVELE (80 aa)) is the Biotinyl-binding domain. Position 690 is an N6-biotinyllysine; by HLCS (Lys-690).

In terms of assembly, the holoenzyme is a dodecamer composed of 6 PCCA/alpha subunits and 6 PCCB/beta subunits. Interacts (via the biotin carboxylation domain) with SIRT4. Interacts with SIRT3 and SIRT5. Mg(2+) serves as cofactor. Requires Mn(2+) as cofactor. It depends on biotin as a cofactor. Post-translationally, acetylated. In terms of processing, the biotin cofactor is covalently attached to the C-terminal biotinyl-binding domain and is required for the catalytic activity. Biotinylation is catalyzed by HLCS.

The protein localises to the mitochondrion matrix. The catalysed reaction is propanoyl-CoA + hydrogencarbonate + ATP = (S)-methylmalonyl-CoA + ADP + phosphate + H(+). It carries out the reaction butanoyl-CoA + hydrogencarbonate + ATP = (2S)-ethylmalonyl-CoA + ADP + phosphate + H(+). It participates in metabolic intermediate metabolism; propanoyl-CoA degradation; succinyl-CoA from propanoyl-CoA: step 1/3. Functionally, this is one of the 2 subunits of the biotin-dependent propionyl-CoA carboxylase (PCC), a mitochondrial enzyme involved in the catabolism of odd chain fatty acids, branched-chain amino acids isoleucine, threonine, methionine, and valine and other metabolites. Propionyl-CoA carboxylase catalyzes the carboxylation of propionyl-CoA/propanoyl-CoA to D-methylmalonyl-CoA/(S)-methylmalonyl-CoA. Within the holoenzyme, the alpha subunit catalyzes the ATP-dependent carboxylation of the biotin carried by the biotin carboxyl carrier (BCC) domain, while the beta subunit then transfers the carboxyl group from carboxylated biotin to propionyl-CoA. Propionyl-CoA carboxylase also significantly acts on butyryl-CoA/butanoyl-CoA, which is converted to ethylmalonyl-CoA/(2S)-ethylmalonyl-CoA. Other alternative minor substrates include (2E)-butenoyl-CoA/crotonoyl-CoA. This is Propionyl-CoA carboxylase alpha chain, mitochondrial from Mus musculus (Mouse).